The sequence spans 271 residues: Urease accessory protein UreD (271 aa).

This sequence belongs to the UreD family. In terms of assembly, ureD, UreF and UreG form a complex that acts as a GTP-hydrolysis-dependent molecular chaperone, activating the urease apoprotein by helping to assemble the nickel containing metallocenter of UreC. The UreE protein probably delivers the nickel.

It is found in the cytoplasm. Required for maturation of urease via the functional incorporation of the urease nickel metallocenter. This chain is Urease accessory protein UreD, found in Actinomyces naeslundii.